The following is a 43-amino-acid chain: Omega-ctenitoxin-Pr1a (43 aa).

4 cysteine pairs are disulfide-bonded: Cys-2–Cys-17, Cys-9–Cys-22, Cys-16–Cys-33, and Cys-24–Cys-31. The residue at position 43 (Gly-43) is a Glycine amide.

In terms of tissue distribution, expressed by the venom gland.

The protein resides in the secreted. In terms of biological role, inhibits high-voltage activated calcium channels. Shifts the voltage-dependence for activation towards hyperpolarized membrane potentials for L- (Cav1), P/Q- (Cav2.1/CACNA1A) and R-type (Cav2.3/CACNA1E) calcium currents. Causes immediate agitation and clockwise gyration, followed by the gradual development of general flaccid paralysis when injected intracerebroventricular into mice at dose levels of 5 ug per mouse. This Phoneutria reidyi (Brazilian Amazonian armed spider) protein is Omega-ctenitoxin-Pr1a.